The primary structure comprises 279 residues: Reaction center protein L chain (279 aa).

3 helical membrane-spanning segments follow: residues 33 to 56 (GFFGVTTLFFSVLGTALIIWGASQ), 85 to 113 (GLWQIITVCAIGAFVSWALREVEICRKLG), and 116 to 141 (YHVPIAFSFAILAYVTLVVIRPILMG). The (7R,8Z)-bacteriochlorophyll b site is built by histidine 154 and histidine 174. The chain crosses the membrane as a helical span at residues 171 to 200 (NPAHMLAITFFFTTTLAMSMHGGLILSAAN). Histidine 191 is a Fe cation binding site. Phenylalanine 217 contacts a ubiquinone. The chain crosses the membrane as a helical span at residues 226–252 (GSLGIHRLGLFLALSAAFWSAVCIVIS). Histidine 231 contacts Fe cation.

This sequence belongs to the reaction center PufL/M/PsbA/D family. In terms of assembly, reaction center is composed of four bacteriochlorophylls, two bacteriopheophytins, two ubiquinones, one iron, and three highly hydrophobic polypeptide chains (designated L, M, and H).

It is found in the cell inner membrane. Functionally, the reaction center is a membrane-bound complex that mediates the initial photochemical event in the electron transfer process of photosynthesis. The sequence is that of Reaction center protein L chain (pufL) from Rubrivivax gelatinosus (strain NBRC 100245 / IL144).